Here is a 511-residue protein sequence, read N- to C-terminus: DnaJ homolog 1, mitochondrial (511 aa).

The N-terminal 55 residues, 1 to 55, are a transit peptide targeting the mitochondrion; sequence MAFQQGVLSRCSGVFRHHVGHSRHINNILYRHAIAFASIAPRIPKSSFHTSAIRN. The J domain maps to 59–127; that stretch reads FKDPYDTLGL…RQQYDQFGPA (69 aa). The segment at 217–297 adopts a CR-type zinc-finger fold; that stretch reads SKNVQLRFSA…CHGEGVQVNR (81 aa). 4 CXXCXGXG motif repeats span residues 230–237, 247–254, 269–276, and 285–292; these read CSTCSGTG, CSTCHGTG, CPTCNGEG, and CTKCHGEG.

Its subcellular location is the mitochondrion. Its function is as follows. Plays a role in mitochondrial biogenesis and protein folding. The chain is DnaJ homolog 1, mitochondrial (MDJ1) from Saccharomyces cerevisiae (strain ATCC 204508 / S288c) (Baker's yeast).